A 173-amino-acid polypeptide reads, in one-letter code: Atrial gland and califin peptides (173 aa).

Residues 1–21 (MKANTMFIILCLSLSTLCVSS) form the signal peptide. A propeptide spanning residues 22–34 (QSTSVHGKIFVPN) is cleaved from the precursor. An Isoleucine amide modification is found at Ile69. The propeptide occupies 73–114 (AAGEMEQSEGQNPETKSHSWRKRSVLTPSLSSLGESLESGIS). The tract at residues 75–94 (GEMEQSEGQNPETKSHSWRK) is disordered. Cysteines 141 and 172 form a disulfide. Position 152 is a leucine amide (Leu152).

Belongs to the molluscan ELH family. In terms of assembly, califin A consists of a 36-residue large subunit bound by a single disulfide bond to a 18-residue small subunit.

The protein resides in the secreted. Functionally, the atrial gland peptide A and peptide B precursors are the source of the 2 peptides that, upon release from this reproductive system gland, initiate the egg-laying process by exciting the bag cell neurons. These neurons, clustered in neural connectives near the abdominal ganglion, in turn release other peptides that act directly on the ganglion and also, via the circulating hemolymph, on many other organs to control the physiological processes of egg-laying. One of these other peptides is the egg-laying hormone. In terms of biological role, injected in sexually mature animals califin A excites LB and LC cells of the abdominal ganglion and causes egg-laying. In Aplysia californica (California sea hare), this protein is Atrial gland and califin peptides.